The sequence spans 166 residues: Large ribosomal subunit protein uL10 (166 aa).

Belongs to the universal ribosomal protein uL10 family. As to quaternary structure, part of the ribosomal stalk of the 50S ribosomal subunit. The N-terminus interacts with L11 and the large rRNA to form the base of the stalk. The C-terminus forms an elongated spine to which L12 dimers bind in a sequential fashion forming a multimeric L10(L12)X complex.

Its function is as follows. Forms part of the ribosomal stalk, playing a central role in the interaction of the ribosome with GTP-bound translation factors. This chain is Large ribosomal subunit protein uL10, found in Bacillus mycoides (strain KBAB4) (Bacillus weihenstephanensis).